Here is a 502-residue protein sequence, read N- to C-terminus: Probable glycine dehydrogenase (decarboxylating) subunit 2 (502 aa).

Lysine 273 is modified (N6-(pyridoxal phosphate)lysine).

The protein belongs to the GcvP family. C-terminal subunit subfamily. In terms of assembly, the glycine cleavage system is composed of four proteins: P, T, L and H. In this organism, the P 'protein' is a heterodimer of two subunits. Pyridoxal 5'-phosphate is required as a cofactor.

The enzyme catalyses N(6)-[(R)-lipoyl]-L-lysyl-[glycine-cleavage complex H protein] + glycine + H(+) = N(6)-[(R)-S(8)-aminomethyldihydrolipoyl]-L-lysyl-[glycine-cleavage complex H protein] + CO2. In terms of biological role, the glycine cleavage system catalyzes the degradation of glycine. The P protein binds the alpha-amino group of glycine through its pyridoxal phosphate cofactor; CO(2) is released and the remaining methylamine moiety is then transferred to the lipoamide cofactor of the H protein. This chain is Probable glycine dehydrogenase (decarboxylating) subunit 2, found in Staphylococcus epidermidis (strain ATCC 35984 / DSM 28319 / BCRC 17069 / CCUG 31568 / BM 3577 / RP62A).